The following is a 179-amino-acid chain: Large ribosomal subunit protein uL10 (179 aa).

Belongs to the universal ribosomal protein uL10 family. In terms of assembly, part of the ribosomal stalk of the 50S ribosomal subunit. The N-terminus interacts with L11 and the large rRNA to form the base of the stalk. The C-terminus forms an elongated spine to which L12 dimers bind in a sequential fashion forming a multimeric L10(L12)X complex.

Functionally, forms part of the ribosomal stalk, playing a central role in the interaction of the ribosome with GTP-bound translation factors. The chain is Large ribosomal subunit protein uL10 from Thermomicrobium roseum (strain ATCC 27502 / DSM 5159 / P-2).